Reading from the N-terminus, the 159-residue chain is Cell division protein SepF (159 aa).

The segment at 23–69 (DYIEEDEEQKPASKSAFDSDHTVTPLASTTAPAASSTTKPFPGGRVN) is disordered. Positions 44–64 (TVTPLASTTAPAASSTTKPFP) are enriched in low complexity.

It belongs to the SepF family. As to quaternary structure, homodimer. Interacts with FtsZ.

It is found in the cytoplasm. Its function is as follows. Cell division protein that is part of the divisome complex and is recruited early to the Z-ring. Probably stimulates Z-ring formation, perhaps through the cross-linking of FtsZ protofilaments. Its function overlaps with FtsA. The protein is Cell division protein SepF of Bifidobacterium longum (strain DJO10A).